We begin with the raw amino-acid sequence, 208 residues long: Large ribosomal subunit protein uL3 (208 aa).

The disordered stretch occupies residues 123 to 147 (RHGQSRGPMAHGSRYHRRPGSMGPV).

The protein belongs to the universal ribosomal protein uL3 family. As to quaternary structure, part of the 50S ribosomal subunit. Forms a cluster with proteins L14 and L19.

In terms of biological role, one of the primary rRNA binding proteins, it binds directly near the 3'-end of the 23S rRNA, where it nucleates assembly of the 50S subunit. The chain is Large ribosomal subunit protein uL3 from Streptococcus gordonii (strain Challis / ATCC 35105 / BCRC 15272 / CH1 / DL1 / V288).